The following is an 828-amino-acid chain: Fibroblast growth factor receptor 4 (828 aa).

The signal sequence occupies residues 1–31 (MSGSIRRSYTAMQNFPRFLLGVLFVATLSSC). Over 32-392 (RPRLSEDEAN…AEPAESRYMD (361 aa)) the chain is Extracellular. One can recognise an Ig-like C2-type 1 domain in the interval 33 to 127 (PRLSEDEANW…GKILRRFSIS (95 aa)). An intrachain disulfide couples C67 to C112. The N-linked (GlcNAc...) asparagine glycan is linked to N70. The disordered stretch occupies residues 132-156 (LASGDEEEEEEDDDDEDGRREDTTA). The span at 135 to 147 (GDEEEEEEDDDDE) shows a compositional bias: acidic residues. Ig-like C2-type domains follow at residues 169 to 259 (PYWT…LTYT) and 272 to 372 (PILQ…AWLT). A disulfide bond links C194 and C247. Residues N244, N281, N313, and N345 are each glycosylated (N-linked (GlcNAc...) asparagine). Residues C294 and C356 are joined by a disulfide bond. Residues 393 to 413 (IIIYTSGFLAVAMAIMIVILC) traverse the membrane as a helical segment. Over 414 to 828 (RMQTPHSKQT…YHNIHSQLGT (415 aa)) the chain is Cytoplasmic. In terms of domain architecture, Protein kinase spans 490-777 (LVLGKPLGEG…ILTAVSEEYL (288 aa)). ATP-binding positions include 496–504 (LGEGCFGQV) and K526. D635 (proton acceptor) is an active-site residue. Residues Y665, Y666, and Y776 each carry the phosphotyrosine; by autocatalysis modification.

This sequence belongs to the protein kinase superfamily. Tyr protein kinase family. Fibroblast growth factor receptor subfamily. In terms of processing, ubiquitinated. Subject to proteasomal degradation when not fully glycosylated. Autophosphorylated. Binding of FGF family members together with heparan sulfate proteoglycan or heparin promotes receptor dimerization and autophosphorylation on tyrosine residues. Autophosphorylation occurs in trans between the two FGFR molecules present in the dimer.

It localises to the cell membrane. It is found in the endosome. The protein resides in the endoplasmic reticulum. It catalyses the reaction L-tyrosyl-[protein] + ATP = O-phospho-L-tyrosyl-[protein] + ADP + H(+). Its activity is regulated as follows. Present in an inactive conformation in the absence of bound ligand. Ligand binding leads to dimerization and activation by autophosphorylation on tyrosine residues. Functionally, tyrosine-protein kinase that acts as a cell-surface receptor for fibroblast growth factors and plays a role in the regulation of cell proliferation, differentiation and migration, and in regulation of lipid metabolism, bile acid biosynthesis, glucose uptake, vitamin D metabolism and phosphate homeostasis. Required for normal down-regulation of the expression of CYP7A1, the rate-limiting enzyme in bile acid synthesis, in response to FGF19. Phosphorylates PLCG1 and FRS2. Ligand binding leads to the activation of several signaling cascades. Activation of PLCG1 leads to the production of the cellular signaling molecules diacylglycerol and inositol 1,4,5-trisphosphate. Phosphorylation of FRS2 triggers recruitment of GRB2, GAB1, PIK3R1 and SOS1, and mediates activation of RAS, MAPK1/ERK2, MAPK3/ERK1 and the MAP kinase signaling pathway, as well as of the AKT1 signaling pathway. This Xenopus laevis (African clawed frog) protein is Fibroblast growth factor receptor 4 (fgfr4).